The sequence spans 520 residues: Probable DNA ligase (520 aa).

Glutamate 213 lines the ATP pocket. The active-site N6-AMP-lysine intermediate is lysine 215. Residues arginine 220, arginine 235, glutamate 264, phenylalanine 300, arginine 372, and lysine 378 each contribute to the ATP site.

This sequence belongs to the ATP-dependent DNA ligase family. Mg(2+) serves as cofactor.

It catalyses the reaction ATP + (deoxyribonucleotide)n-3'-hydroxyl + 5'-phospho-(deoxyribonucleotide)m = (deoxyribonucleotide)n+m + AMP + diphosphate.. Its function is as follows. DNA ligase that seals nicks in double-stranded DNA during DNA replication, DNA recombination and DNA repair. The polypeptide is Probable DNA ligase (Mycobacterium sp. (strain JLS)).